A 533-amino-acid chain; its full sequence is WUSCHEL-related homeobox 7 (533 aa).

Disordered regions lie at residues 1–74 (MASS…NPRP) and 125–212 (SKNK…STQA). Positions 28–41 (AGSPPSLLSGSSAG) are enriched in low complexity. A compositionally biased stretch (basic and acidic residues) spans 59 to 68 (GEERVPDPKP). Residues 65–129 (DPKPRWNPRP…NRKSRSKNKL (65 aa)) constitute a DNA-binding region (homeobox; WUS-type). Over residues 132–143 (GGTGRAGLGLGG) the composition is skewed to gly residues. The span at 161–174 (FTPPPPILPAPQPV) shows a compositional bias: pro residues. Low complexity predominate over residues 175-202 (QPQQQLVSPVAAPTSSSSSSSDRSSGSS).

Belongs to the WUS homeobox family.

The protein localises to the nucleus. Transcription factor which may be involved in developmental processes. This chain is WUSCHEL-related homeobox 7 (WOX7), found in Oryza sativa subsp. japonica (Rice).